A 299-amino-acid polypeptide reads, in one-letter code: Lathosterol oxidase (299 aa).

3 helical membrane-spanning segments follow: residues 32 to 52, 79 to 99, and 117 to 137; these read ISLL…CATL, FTVK…LLEL, and IHLM…IYWI. Positions 124 to 252 constitute a Fatty acid hydroxylase domain; that stretch reads VSFLFFTDML…YFTLWDRIGG (129 aa). The Histidine box-1 motif lies at 138 to 143; the sequence is HRGLHH. The Histidine box-2 signature appears at 151–155; the sequence is HKPHH. Residues 186-206 traverse the membrane as a helical segment; it reads VFPLHKVVYLGLYVLVNVWTI. Positions 228 to 233 match the Histidine box-3 motif; sequence HHTDHH. A Phosphoserine modification is found at S253. The disordered stretch occupies residues 280–299; it reads FAENGCKGKKVGNGEFTKNK.

The protein belongs to the sterol desaturase family. It depends on Fe cation as a cofactor.

Its subcellular location is the endoplasmic reticulum membrane. It carries out the reaction a Delta(7)-sterol + 2 Fe(II)-[cytochrome b5] + O2 + 2 H(+) = a Delta(5),Delta(7)-sterol + 2 Fe(III)-[cytochrome b5] + 2 H2O. It catalyses the reaction lathosterol + 2 Fe(II)-[cytochrome b5] + O2 + 2 H(+) = 7-dehydrocholesterol + 2 Fe(III)-[cytochrome b5] + 2 H2O. The catalysed reaction is 5alpha-cholesta-7,24-dien-3beta-ol + 2 Fe(II)-[cytochrome b5] + O2 + 2 H(+) = 7-dehydrodesmosterol + 2 Fe(III)-[cytochrome b5] + 2 H2O. Its pathway is steroid biosynthesis; cholesterol biosynthesis. Functionally, catalyzes the penultimate step of the biosynthesis of cholesterol, the dehydrogenation of lathosterol into 7-dehydrocholesterol (7-DHC). Cholesterol is the major sterol component in mammalian membranes and a precursor for bile acid and steroid hormone synthesis. In addition to its essential role in cholesterol biosynthesis, it also indirectly regulates ferroptosis through the production of 7-DHC. By diverting the spread of damage caused by peroxyl radicals from the phospholipid components to its sterol nucleus, 7-DHC prevents this form of cell death. The chain is Lathosterol oxidase from Mus musculus (Mouse).